Reading from the N-terminus, the 112-residue chain is UPF0102 protein Spea_0251 (112 aa).

It belongs to the UPF0102 family.

This chain is UPF0102 protein Spea_0251, found in Shewanella pealeana (strain ATCC 700345 / ANG-SQ1).